Consider the following 99-residue polypeptide: MALTKAEMSEYLFDKLGLSKRDAKELVELFFEEIRRALENGEQVKLSGFGNFDLRDKNQRPGRNPKTGEDIPITARRVVTFRPGQKLKSRVENASPKDK.

Residues 49–75 form a disordered region; the sequence is FGNFDLRDKNQRPGRNPKTGEDIPITA.

Belongs to the bacterial histone-like protein family. In terms of assembly, heterodimer of an alpha and a beta chain.

In terms of biological role, this protein is one of the two subunits of integration host factor, a specific DNA-binding protein that functions in genetic recombination as well as in transcriptional and translational control. The chain is Integration host factor subunit alpha from Klebsiella pneumoniae (strain 342).